A 142-amino-acid chain; its full sequence is Deoxyuridine 5'-triphosphate nucleotidohydrolase (142 aa).

Belongs to the dUTPase family. It depends on Mg(2+) as a cofactor.

It carries out the reaction dUTP + H2O = dUMP + diphosphate + H(+). Functionally, this enzyme is involved in nucleotide metabolism: it produces dUMP, the immediate precursor of thymidine nucleotides and it decreases the intracellular concentration of dUTP so that uracil cannot be incorporated into DNA. The protein is Deoxyuridine 5'-triphosphate nucleotidohydrolase (DUT) of Swinepox virus (strain Kasza) (SWPV).